A 144-amino-acid polypeptide reads, in one-letter code: Ribosomal RNA large subunit methyltransferase H (144 aa).

S-adenosyl-L-methionine-binding positions include L63, G92, and 111-116; that span reads LSPMTF.

This sequence belongs to the RNA methyltransferase RlmH family. Homodimer.

The protein localises to the cytoplasm. The enzyme catalyses pseudouridine(1915) in 23S rRNA + S-adenosyl-L-methionine = N(3)-methylpseudouridine(1915) in 23S rRNA + S-adenosyl-L-homocysteine + H(+). In terms of biological role, specifically methylates the pseudouridine at position 1915 (m3Psi1915) in 23S rRNA. This Parasynechococcus marenigrum (strain WH8102) protein is Ribosomal RNA large subunit methyltransferase H.